We begin with the raw amino-acid sequence, 179 residues long: uncharacterized protein (179 aa).

The next 4 membrane-spanning stretches (helical) occupy residues 33 to 53, 63 to 83, 89 to 109, and 115 to 135; these read HIIA…VILD, VMFI…MLVL, ITAS…FVLT, and FSPF…EYFF.

The protein resides in the cell membrane. This is an uncharacterized protein from Bacillus subtilis (strain 168).